Consider the following 297-residue polypeptide: Myoblast determination protein 1 homolog (297 aa).

Residues 52–76 form a disordered region; sequence KPEEHPHHHGHHHGHPHEEEHVRAP. The 52-residue stretch at 101 to 152 folds into the bHLH domain; it reads DRRKAATMRERRRLSKVNEAFETLKRCTSTNPNQRLPKVEILRNAIRYIESL. Disordered stretches follow at residues 171–221 and 243–297; these read SGES…GKSS and CPIL…YQVL. 2 stretches are compositionally biased toward polar residues: residues 174-184 and 258-297; these read SDASSPRSNCS and CSPQEGASLNDSGAQIPSPTNCTPLPQDSSSSSNPIYQVL.

Efficient DNA binding requires dimerization with another bHLH protein. Seems to form active heterodimers with ITF-2.

The protein localises to the nucleus. Its function is as follows. Acts as a transcriptional activator that promotes transcription of muscle-specific target genes and plays a role in muscle differentiation. Induces fibroblasts to differentiate into myoblasts. Interacts with and is inhibited by the twist protein. This interaction probably involves the basic domains of both proteins. The polypeptide is Myoblast determination protein 1 homolog (MYOD1) (Coturnix japonica (Japanese quail)).